Reading from the N-terminus, the 624-residue chain is Chaperone protein HtpG (624 aa).

The a; substrate-binding stretch occupies residues 1–341 (MAVKQFKAES…SPDLSLNISR (341 aa)). The b stretch occupies residues 342 to 550 (ELLQHDRQLK…DGELSIEMEK (209 aa)). The c stretch occupies residues 551–624 (VLKMMPDNNN…FANDVASLMK (74 aa)).

It belongs to the heat shock protein 90 family. In terms of assembly, homodimer.

It is found in the cytoplasm. Functionally, molecular chaperone. Has ATPase activity. This chain is Chaperone protein HtpG, found in Clostridium acetobutylicum (strain ATCC 824 / DSM 792 / JCM 1419 / IAM 19013 / LMG 5710 / NBRC 13948 / NRRL B-527 / VKM B-1787 / 2291 / W).